A 143-amino-acid polypeptide reads, in one-letter code: Putative RNA polymerase II subunit B1 CTD phosphatase RPAP2 homolog (143 aa).

Residues 46-129 form an RTR1-type zinc finger; the sequence is SLLCEIGPPN…VPTSPLWLRD (84 aa). Residues C69, C74, C105, and C109 each contribute to the Zn(2+) site.

Belongs to the RPAP2 family.

The protein resides in the nucleus. The catalysed reaction is O-phospho-L-seryl-[protein] + H2O = L-seryl-[protein] + phosphate. The enzyme catalyses O-phospho-L-threonyl-[protein] + H2O = L-threonyl-[protein] + phosphate. Its function is as follows. Putative RNA polymerase II subunit B1 C-terminal domain (CTD) phosphatase involved in RNA polymerase II transcription regulation. This chain is Putative RNA polymerase II subunit B1 CTD phosphatase RPAP2 homolog, found in Drosophila melanogaster (Fruit fly).